A 119-amino-acid chain; its full sequence is MSKLVVFLFCIQVCFIQNVYSQCLGRVGPGGPPLGPYGGPLGGPGYGPVGYGGCGGYGGSGIGNVAVAGELPVAGSTGVTGQVPVIGAVEFAGPACAVGSVSISGACGPTCGCGGSPFY.

The signal sequence occupies residues 1–21; the sequence is MSKLVVFLFCIQVCFIQNVYS. The segment at 22-55 is left arm; it reads QCLGRVGPGGPPLGPYGGPLGGPGYGPVGYGGCG. Positions 56–103 are central domain; the sequence is GYGGSGIGNVAVAGELPVAGSTGVTGQVPVIGAVEFAGPACAVGSVSI. Residues 104 to 119 form a right arm region; the sequence is SGACGPTCGCGGSPFY.

It belongs to the chorion protein family.

This protein is one of many from the eggshell of the silk moth. The protein is Chorion class CA protein ERA.2 (ERA.2) of Bombyx mori (Silk moth).